A 213-amino-acid chain; its full sequence is Thymidylate kinase (213 aa).

Residue 9 to 16 (GLEGAGKS) coordinates ATP.

Belongs to the thymidylate kinase family.

The enzyme catalyses dTMP + ATP = dTDP + ADP. Functionally, phosphorylation of dTMP to form dTDP in both de novo and salvage pathways of dTTP synthesis. This chain is Thymidylate kinase, found in Aeromonas hydrophila subsp. hydrophila (strain ATCC 7966 / DSM 30187 / BCRC 13018 / CCUG 14551 / JCM 1027 / KCTC 2358 / NCIMB 9240 / NCTC 8049).